The sequence spans 481 residues: MATVLSSTGKISQVIGAVVDVTFDGELPAILSALETDNNGNRLVLEVAQHLGENTVRTIAMDSTDGLTRGQPVTNTGAQISVPVGPKTLGRIMNVIGEPIDERGPVGAEQTAPIHAKAPEFIEQSTEAAILVTGIKVIDLLAPYARGGKIGLFGGAGVGKTVLIQELINNIAKGHGGVSVFAGVGERTREGNDLYHEFLDAGVIAKDADGNPTPDGSKVALVFGQMNEPPGARARVALSGLTMAEYFRDQEGQDVLFFVDNIFRFTQAGSEVSALLGRIPSAVGYQPTLATDMGQLQERITSTTKGSITSVQAIYVPADDLTDPAPATSFAHLDATTTLNRAISELGIYPAVDPLDSTSRVLTPAVVGQEHYETARRVQETLQKYKSLQDIIAILGMDELSEEDKLTVARARKIQRFLSQPFHVAEVFTGIPGKFVQVEDTVRSFKAVVDGEYDHLPEAAFYMVGGIDEAVEKAKKLAAEA.

154–161 (GGAGVGKT) provides a ligand contact to ATP.

The protein belongs to the ATPase alpha/beta chains family. As to quaternary structure, F-type ATPases have 2 components, CF(1) - the catalytic core - and CF(0) - the membrane proton channel. CF(1) has five subunits: alpha(3), beta(3), gamma(1), delta(1), epsilon(1). CF(0) has three main subunits: a(1), b(2) and c(9-12). The alpha and beta chains form an alternating ring which encloses part of the gamma chain. CF(1) is attached to CF(0) by a central stalk formed by the gamma and epsilon chains, while a peripheral stalk is formed by the delta and b chains.

It is found in the cell inner membrane. The catalysed reaction is ATP + H2O + 4 H(+)(in) = ADP + phosphate + 5 H(+)(out). Functionally, produces ATP from ADP in the presence of a proton gradient across the membrane. The catalytic sites are hosted primarily by the beta subunits. The protein is ATP synthase subunit beta of Novosphingobium aromaticivorans (strain ATCC 700278 / DSM 12444 / CCUG 56034 / CIP 105152 / NBRC 16084 / F199).